The following is a 286-amino-acid chain: Probable 4-deoxy-4-formamido-L-arabinose-phosphoundecaprenol deformylase ArnD (286 aa).

Residues 1–248 (MGTKLGVPNL…IAINEGINFC (248 aa)) form the NodB homology domain.

Belongs to the polysaccharide deacetylase family. ArnD deformylase subfamily.

The catalysed reaction is 4-deoxy-4-formamido-alpha-L-arabinopyranosyl di-trans,octa-cis-undecaprenyl phosphate + H2O = 4-amino-4-deoxy-alpha-L-arabinopyranosyl di-trans,octa-cis-undecaprenyl phosphate + formate. Its pathway is glycolipid biosynthesis; 4-amino-4-deoxy-alpha-L-arabinose undecaprenyl phosphate biosynthesis; 4-amino-4-deoxy-alpha-L-arabinose undecaprenyl phosphate from UDP-4-deoxy-4-formamido-beta-L-arabinose and undecaprenyl phosphate: step 2/2. The protein operates within bacterial outer membrane biogenesis; lipopolysaccharide biosynthesis. In terms of biological role, catalyzes the deformylation of 4-deoxy-4-formamido-L-arabinose-phosphoundecaprenol to 4-amino-4-deoxy-L-arabinose-phosphoundecaprenol. The modified arabinose is attached to lipid A and is required for resistance to polymyxin and cationic antimicrobial peptides. The chain is Probable 4-deoxy-4-formamido-L-arabinose-phosphoundecaprenol deformylase ArnD from Wigglesworthia glossinidia brevipalpis.